The chain runs to 161 residues: Ribonuclease H (161 aa).

The 140-residue stretch at 2 to 141 (TNNEIIAATD…ADSLARQAAN (140 aa)) folds into the RNase H type-1 domain. Mg(2+)-binding residues include Asp11, Glu46, Asp69, and Asp133.

This sequence belongs to the RNase H family. In terms of assembly, monomer. It depends on Mg(2+) as a cofactor.

The protein resides in the cytoplasm. It carries out the reaction Endonucleolytic cleavage to 5'-phosphomonoester.. Endonuclease that specifically degrades the RNA of RNA-DNA hybrids. The polypeptide is Ribonuclease H (Tropheryma whipplei (strain TW08/27) (Whipple's bacillus)).